A 492-amino-acid polypeptide reads, in one-letter code: Ribose import ATP-binding protein RbsA (492 aa).

ABC transporter domains are found at residues 3–239 and 238–492; these read IDMR…VGRK and RKLE…TGGK. 35 to 42 serves as a coordination point for ATP; that stretch reads GENGAGKS.

Belongs to the ABC transporter superfamily. Ribose importer (TC 3.A.1.2.1) family. As to quaternary structure, the complex is composed of an ATP-binding protein (RbsA), two transmembrane proteins (RbsC) and a solute-binding protein (RbsB).

Its subcellular location is the cell membrane. The enzyme catalyses D-ribose(out) + ATP + H2O = D-ribose(in) + ADP + phosphate + H(+). Its function is as follows. Part of the ABC transporter complex RbsABC involved in ribose import. Responsible for energy coupling to the transport system. In Streptococcus agalactiae serotype Ia (strain ATCC 27591 / A909 / CDC SS700), this protein is Ribose import ATP-binding protein RbsA.